Consider the following 81-residue polypeptide: Conotoxin Vc6.13 (81 aa).

Residues Met-1–Ala-19 form the signal peptide. Positions Leu-20–Trp-44 are excised as a propeptide. Disulfide bonds link Cys-49-Cys-63, Cys-56-Cys-67, and Cys-62-Cys-72.

Belongs to the conotoxin O2 superfamily. Expressed by the venom duct.

The protein resides in the secreted. In terms of biological role, inhibits voltage-gated ion channels. The polypeptide is Conotoxin Vc6.13 (Conus victoriae (Queen Victoria cone)).